The sequence spans 551 residues: Adenylosuccinate synthetase (551 aa).

GTP contacts are provided by residues 131-137 and 159-161; these read GDEGKGK and GHT. D132 serves as the catalytic Proton acceptor. Positions 132 and 159 each coordinate Mg(2+). Residues 132-135, 157-160, T248, R262, N339, T354, and R418 contribute to the IMP site; these read DEGK and NAGH. The active-site Proton donor is the H160. 414-420 contacts substrate; the sequence is TTTGRAR. GTP-binding positions include R420, 446–448, and 528–530; these read KLD and GVG.

This sequence belongs to the adenylosuccinate synthetase family. In terms of assembly, homodimer. Mg(2+) serves as cofactor.

The protein localises to the cytoplasm. The catalysed reaction is IMP + L-aspartate + GTP = N(6)-(1,2-dicarboxyethyl)-AMP + GDP + phosphate + 2 H(+). Its pathway is purine metabolism; AMP biosynthesis via de novo pathway; AMP from IMP: step 1/2. Plays an important role in the de novo pathway and in the salvage pathway of purine nucleotide biosynthesis. Catalyzes the first committed step in the biosynthesis of AMP from IMP. The chain is Adenylosuccinate synthetase from Phytophthora infestans (strain T30-4) (Potato late blight agent).